Reading from the N-terminus, the 257-residue chain is NAD-capped RNA hydrolase NudC (257 aa).

Positions 25 and 69 each coordinate substrate. Residues Cys98 and Cys101 each contribute to the Zn(2+) site. Residue Glu111 participates in substrate binding. Zn(2+) contacts are provided by Cys116 and Cys119. Residue Tyr124 participates in substrate binding. One can recognise a Nudix hydrolase domain in the interval 125-248 (PQIAPCIIVA…TVARRLIEDT (124 aa)). A divalent metal cation-binding residues include Ala158, Glu174, and Glu178. The Nudix box motif lies at 159–180 (GFVEVGETLEQAVAREVMEESG). 192 to 199 (QPWPFPQS) serves as a coordination point for substrate. Glu219 serves as a coordination point for a divalent metal cation. Ala241 serves as a coordination point for substrate.

It belongs to the Nudix hydrolase family. NudC subfamily. As to quaternary structure, homodimer. Mg(2+) is required as a cofactor. Mn(2+) serves as cofactor. Requires Zn(2+) as cofactor.

It carries out the reaction a 5'-end NAD(+)-phospho-ribonucleoside in mRNA + H2O = a 5'-end phospho-adenosine-phospho-ribonucleoside in mRNA + beta-nicotinamide D-ribonucleotide + 2 H(+). It catalyses the reaction NAD(+) + H2O = beta-nicotinamide D-ribonucleotide + AMP + 2 H(+). The enzyme catalyses NADH + H2O = reduced beta-nicotinamide D-ribonucleotide + AMP + 2 H(+). Its function is as follows. mRNA decapping enzyme that specifically removes the nicotinamide adenine dinucleotide (NAD) cap from a subset of mRNAs by hydrolyzing the diphosphate linkage to produce nicotinamide mononucleotide (NMN) and 5' monophosphate mRNA. The NAD-cap is present at the 5'-end of some mRNAs and stabilizes RNA against 5'-processing. Has preference for mRNAs with a 5'-end purine. Catalyzes the hydrolysis of a broad range of dinucleotide pyrophosphates. In Escherichia coli O7:K1 (strain IAI39 / ExPEC), this protein is NAD-capped RNA hydrolase NudC.